We begin with the raw amino-acid sequence, 175 residues long: Ribosome maturation factor RimM (175 aa).

The PRC barrel domain occupies 98-172 (DGEFHVRDLQ…WLLITPPKGL (75 aa)).

The protein belongs to the RimM family. As to quaternary structure, binds ribosomal protein uS19.

It is found in the cytoplasm. Functionally, an accessory protein needed during the final step in the assembly of 30S ribosomal subunit, possibly for assembly of the head region. Essential for efficient processing of 16S rRNA. May be needed both before and after RbfA during the maturation of 16S rRNA. It has affinity for free ribosomal 30S subunits but not for 70S ribosomes. The polypeptide is Ribosome maturation factor RimM (Synechococcus sp. (strain RCC307)).